A 210-amino-acid chain; its full sequence is uncharacterized protein (210 aa).

This is an uncharacterized protein from Treponema pallidum (strain Nichols).